The primary structure comprises 366 residues: tRNA 2-selenouridine synthase (366 aa).

Residues 12 to 135 (FLNDVPMMDA…MRTFLLDTLH (124 aa)) form the Rhodanese domain. Residue cysteine 95 is the S-selanylcysteine intermediate of the active site.

Belongs to the SelU family. In terms of assembly, monomer.

It carries out the reaction 5-methylaminomethyl-2-thiouridine(34) in tRNA + selenophosphate + (2E)-geranyl diphosphate + H2O + H(+) = 5-methylaminomethyl-2-selenouridine(34) in tRNA + (2E)-thiogeraniol + phosphate + diphosphate. The catalysed reaction is 5-methylaminomethyl-2-thiouridine(34) in tRNA + (2E)-geranyl diphosphate = 5-methylaminomethyl-S-(2E)-geranyl-thiouridine(34) in tRNA + diphosphate. The enzyme catalyses 5-methylaminomethyl-S-(2E)-geranyl-thiouridine(34) in tRNA + selenophosphate + H(+) = 5-methylaminomethyl-2-(Se-phospho)selenouridine(34) in tRNA + (2E)-thiogeraniol. It catalyses the reaction 5-methylaminomethyl-2-(Se-phospho)selenouridine(34) in tRNA + H2O = 5-methylaminomethyl-2-selenouridine(34) in tRNA + phosphate. Its function is as follows. Involved in the post-transcriptional modification of the uridine at the wobble position (U34) of tRNA(Lys), tRNA(Glu) and tRNA(Gln). Catalyzes the conversion of 2-thiouridine (S2U-RNA) to 2-selenouridine (Se2U-RNA). Acts in a two-step process involving geranylation of 2-thiouridine (S2U) to S-geranyl-2-thiouridine (geS2U) and subsequent selenation of the latter derivative to 2-selenouridine (Se2U) in the tRNA chain. This chain is tRNA 2-selenouridine synthase, found in Pseudomonas savastanoi pv. phaseolicola (strain 1448A / Race 6) (Pseudomonas syringae pv. phaseolicola (strain 1448A / Race 6)).